A 292-amino-acid chain; its full sequence is ATP synthase gamma chain (292 aa).

It belongs to the ATPase gamma chain family. As to quaternary structure, F-type ATPases have 2 components, CF(1) - the catalytic core - and CF(0) - the membrane proton channel. CF(1) has five subunits: alpha(3), beta(3), gamma(1), delta(1), epsilon(1). CF(0) has three main subunits: a, b and c.

The protein localises to the cell membrane. Functionally, produces ATP from ADP in the presence of a proton gradient across the membrane. The gamma chain is believed to be important in regulating ATPase activity and the flow of protons through the CF(0) complex. This is ATP synthase gamma chain from Streptococcus thermophilus (strain CNRZ 1066).